A 131-amino-acid chain; its full sequence is uncharacterized protein (131 aa).

Positions 13–32 are disordered; it reads TYSPLPEPPPTPALGGQRGP.

This is an uncharacterized protein from Homo sapiens (Human).